The primary structure comprises 181 residues: MSLRSAFALLPLFLLLIVANVESRKDVGEYWKLVMKDQDMPEEIQGLLDASNIKNSKTHAKENMGAIGEFEPRPYASAYGDNEIHAKENMGAIGEFEPRPNASAYGDNEIHANENKGASGEFEPRPNISAYGDNEIHANENKGAIGEFETRPNASAYGDNEIGAEFTDDFEPRPSMTKYNA.

4 tandem repeats follow at residues 59–84, 85–110, 111–136, and 137–162. The tract at residues 59–162 is 4 X 26 AA tandem repeats; it reads HAKENMGAIG…NASAYGDNEI (104 aa). Residues 94 to 181 form a disordered region; the sequence is GEFEPRPNAS…PRPSMTKYNA (88 aa).

To organ specific protein P4. Expressed in stems.

In Pisum sativum (Garden pea), this protein is Organ-specific protein S2.